The sequence spans 507 residues: Proton-coupled zinc antiporter SLC30A1 (507 aa).

Over 1 to 10 the chain is Cytoplasmic; the sequence is MGCWGRNRGR. The helical transmembrane segment at 11–31 threads the bilayer; the sequence is LLCMLALTFMFMVLEVVVSRV. Residues 32-35 are Extracellular-facing; sequence TSSL. A helical transmembrane segment spans residues 36–56; it reads AMLSDSFHMLSDVLALVVALV. Residues histidine 43 and aspartate 47 each coordinate Zn(2+). Topologically, residues 57–78 are cytoplasmic; the sequence is AERFARRTHATQKNTFGWIRAE. A helical transmembrane segment spans residues 79–99; the sequence is VMGALVNAIFLTGLCFAILLE. Over 100–113 the chain is Extracellular; it reads AIERFIEPHEMQQP. Residues 114–134 form a helical membrane-spanning segment; sequence LVVLGVGVAGLLVNVLGLCLF. Topologically, residues 135-248 are cytoplasmic; sequence HHHSGFSQDS…RAGQLNMRGV (114 aa). The disordered stretch occupies residues 142-217; that stretch reads QDSGHGHSHG…DPENPRSGDT (76 aa). A 6 X 2 AA approximate repeats of H-G region spans residues 146–158; sequence HGHSHGGHGHGHG. Over residues 147 to 167 the composition is skewed to basic residues; that stretch reads GHSHGGHGHGHGLPKGPRVKS. The segment covering 189–201 has biased composition (polar residues); the sequence is TNTLVANTSNSNG. The chain crosses the membrane as a helical span at residues 249–269; that stretch reads FLHVLGDALGSVIVVVNALVF. The Zn(2+) site is built by histidine 251 and aspartate 255. Topologically, residues 270–308 are extracellular; the sequence is YFSWKGCSEGDFCVNPCFPDPCKAFVEIINSTHASVYEA. The N-linked (GlcNAc...) asparagine glycan is linked to asparagine 299. Residues 309 to 329 form a helical membrane-spanning segment; the sequence is GPCWVLYLDPTLCVVMVCILL. The Cytoplasmic portion of the chain corresponds to 330 to 507; sequence YTTYPLLKES…MPNKQPESSL (178 aa). Serine 506 carries the post-translational modification Phosphoserine.

This sequence belongs to the cation diffusion facilitator (CDF) transporter (TC 2.A.4) family. SLC30A subfamily. Homodimer. Interacts with TMEM163. Interacts and forms a complex with TMC6 and TMC8; the interaction regulates zinc transport into the ER. As to quaternary structure, (Microbial infection) Interacts with human papillomavirus 16/HPV16 protein E5; the interaction alleviates SLC30A1-mediated transcription factors inhibition. In terms of processing, N-glycosylated at Asn-299. N-glycosylation promotes endocytosis and degradation through the proteasomal or lysosomal pathways.

The protein localises to the cell membrane. Its subcellular location is the basolateral cell membrane. The protein resides in the cytoplasmic vesicle membrane. It localises to the cytoplasm. It is found in the endoplasmic reticulum membrane. The protein localises to the golgi apparatus membrane. Its subcellular location is the nucleus membrane. The catalysed reaction is Zn(2+)(in) + 2 H(+)(out) = Zn(2+)(out) + 2 H(+)(in). Functionally, zinc ion:proton antiporter that could function at the plasma membrane mediating zinc efflux from cells against its electrochemical gradient protecting them from intracellular zinc accumulation and toxicity. Alternatively, could prevent the transport to the plasma membrane of CACNB2, the L-type calcium channels regulatory subunit, through a yet to be defined mechanism. By modulating the expression of these channels at the plasma membrane, could prevent calcium and zinc influx into cells. By the same mechanism, could also prevent L-type calcium channels-mediated heavy metal influx into cells. In some cells, could also function as a zinc ion:proton antiporter mediating zinc entry into the lumen of cytoplasmic vesicles. In macrophages, can increase zinc ions concentration into the lumen of cytoplasmic vesicles containing engulfed bacteria and could help inactivate them. Forms a complex with TMC6/EVER1 and TMC8/EVER2 at the ER membrane of keratynocytes which facilitates zinc uptake into the ER. Down-regulates the activity of transcription factors induced by zinc and cytokines. The sequence is that of Proton-coupled zinc antiporter SLC30A1 from Homo sapiens (Human).